A 251-amino-acid chain; its full sequence is Azurocidin (251 aa).

The signal sequence occupies residues 1–19; it reads MTRLTVLALLAGLLASSRA. The propeptide at 20 to 26 is removed in mature form; it reads GSSPLLD. The propeptide at 25–26 is dipeptide found in non-mature form; it reads LD. Residues 27 to 244 enclose the Peptidase S1 domain; it reads IVGGRKARPR…FRDWIDGVLN (218 aa). Residues 46–70 form a possesses antibiotic activity region; the sequence is NQGRHFCGGALIHARFVMTAASCFQ. Cys-52 and Cys-68 are joined by a disulfide. The N-linked (GlcNAc...) asparagine; partial glycan is linked to Asn-126. A glycan (N-linked (GlcNAc...) asparagine) is linked at Asn-140. Cystine bridges form between Cys-149–Cys-207, Cys-180–Cys-186, and Cys-197–Cys-222. The N-linked (GlcNAc...) asparagine; partial glycan is linked to Asn-171. The propeptide at 249–251 is removed in mature form; it reads GPA.

Belongs to the peptidase S1 family. Elastase subfamily. Cleavage of the N-terminal propeptide which is composed of 7 amino acids occurs in two steps. The initial cleavage of 5 amino acids is followed by the cleavage of a dipeptide to produce the mature form.

The protein localises to the cytoplasmic granule membrane. In terms of biological role, this is a neutrophil granule-derived antibacterial and monocyte- and fibroblast-specific chemotactic glycoprotein. Binds heparin. The cytotoxic action is limited to many species of Gram-negative bacteria; this specificity may be explained by a strong affinity of the very basic N-terminal half for the negatively charged lipopolysaccharides that are unique to the Gram-negative bacterial outer envelope. It may play a role in mediating recruitment of monocytes in the second wave of inflammation. Has antibacterial activity against the Gram-negative bacterium P.aeruginosa, this activity is inhibited by LPS from P.aeruginosa. Acting alone, it does not have antimicrobial activity against the Gram-negative bacteria A.actinomycetemcomitans ATCC 29532, A.actinomycetemcomitans NCTC 9709, A.actinomycetemcomitans FDC-Y4, H.aphrophilus ATCC 13252, E.corrodens ATCC 23834, C.sputigena ATCC 33123, Capnocytophaga sp ATCC 33124, Capnocytophaga sp ATCC 27872 or E.coli ML-35. Has antibacterial activity against C.sputigena ATCC 33123 when acting synergistically with either elastase or cathepsin G. This is Azurocidin from Homo sapiens (Human).